The chain runs to 90 residues: RNA-binding protein Hfq (90 aa).

In terms of domain architecture, Sm spans 9–69 (DRFLNHLRVN…ISTIIPSSYV (61 aa)).

This sequence belongs to the Hfq family. In terms of assembly, homohexamer.

Functionally, RNA chaperone that binds small regulatory RNA (sRNAs) and mRNAs to facilitate mRNA translational regulation in response to envelope stress, environmental stress and changes in metabolite concentrations. Also binds with high specificity to tRNAs. This chain is RNA-binding protein Hfq, found in Thermotoga sp. (strain RQ2).